Here is a 350-residue protein sequence, read N- to C-terminus: GDSL esterase/lipase At4g10955 (350 aa).

Belongs to the 'GDSL' lipolytic enzyme family.

In Arabidopsis thaliana (Mouse-ear cress), this protein is GDSL esterase/lipase At4g10955.